Reading from the N-terminus, the 311-residue chain is Malate dehydrogenase (311 aa).

Residues 7–13 and Asp34 contribute to the NAD(+) site; that span reads GAAGGIG. 2 residues coordinate substrate: Arg81 and Arg87. NAD(+)-binding positions include Asn94 and 117-119; that span reads ITN. Positions 119 and 153 each coordinate substrate. Catalysis depends on His177, which acts as the Proton acceptor. Met227 provides a ligand contact to NAD(+).

The protein belongs to the LDH/MDH superfamily. MDH type 1 family. As to quaternary structure, homodimer.

The enzyme catalyses (S)-malate + NAD(+) = oxaloacetate + NADH + H(+). Functionally, catalyzes the reversible oxidation of malate to oxaloacetate. This is Malate dehydrogenase from Shewanella denitrificans (strain OS217 / ATCC BAA-1090 / DSM 15013).